Here is a 217-residue protein sequence, read N- to C-terminus: MSNPFLKQVFNKDKTFRPKRKFEPGTQRFELHKKAQASLNAGLDLRLAVQLPPGEDLNDWVTVHVVDFFNRVNLIYGTISDGCTEQSCPVMSGGPKYEYRWQDEHKFRKPTALSAPRYMDLLMDWIEAQINNEDLFPTNVGTPFPKNFLQAVRKILSRLFRVFVHVYIHHFDRIAQMGSEAHVNTCYKHFYYFVKEFGLIDTKELEPLKEMTARMCH.

Zn(2+) contacts are provided by Cys83, Cys88, His165, and His170.

This sequence belongs to the MOB1/phocein family.

May regulate the activity of kinases. The sequence is that of MOB kinase activator 3A (MOB3A) from Pongo abelii (Sumatran orangutan).